The sequence spans 312 residues: Olfactory receptor 10C1 (312 aa).

Over 1-24 (MSANTSMVTEFLLLGFSHLADLQG) the chain is Extracellular. N-linked (GlcNAc...) asparagine glycosylation occurs at asparagine 4. Residues 25–45 (LLFSVFLTIYLLTVAGNFLIV) traverse the membrane as a helical segment. Residues 46 to 53 (VLVSTDAA) lie on the Cytoplasmic side of the membrane. The chain crosses the membrane as a helical span at residues 54–74 (LQSPMYFFLRTLSALEIGYTS). Residues 75–98 (VTVPLLLHHLLTGRRHISRSGCAL) lie on the Extracellular side of the membrane. Residues cysteine 96 and cysteine 188 are joined by a disulfide bond. Residues 99-119 (QMFFFLFFGATECCLLAAMAY) form a helical membrane-spanning segment. Over 120-138 (DRYAAICEPLRYPLLLSHR) the chain is Cytoplasmic. The helical transmembrane segment at 139-159 (VCLQLAGSAWACGVLVGLGHT) threads the bilayer. The Extracellular segment spans residues 160-196 (PFIFSLPFCGPNTIPQFFCEIQPVLQLVCGDTSLNEL). Residues 197–216 (QIILATALLILCPFGLILGS) traverse the membrane as a helical segment. The Cytoplasmic segment spans residues 217 to 236 (YGRILVTIFRIPSVAGRRKA). The helical transmembrane segment at 237 to 257 (FSTCSSHLIMVSLFYGTALFI) threads the bilayer. At 258–270 (YIRPKASYDPATD) the chain is on the extracellular side. The helical transmembrane segment at 271-291 (PLVSLFYAVVTPILNPIIYSL) threads the bilayer. At 292 to 312 (RNTEVKAALKRTIQKTVPMEI) the chain is on the cytoplasmic side.

It belongs to the G-protein coupled receptor 1 family.

It is found in the cell membrane. Its function is as follows. Odorant receptor. The chain is Olfactory receptor 10C1 (OR10C1) from Homo sapiens (Human).